The chain runs to 346 residues: Glycosyltransferase 1 domain-containing protein 1 (346 aa).

The N-terminal stretch at 1-16 (MRLLFLAVLRPHTGNA) is a signal peptide.

It belongs to the glycosyltransferase group 1 family. Glycosyltransferase 4 subfamily.

The protein resides in the secreted. The polypeptide is Glycosyltransferase 1 domain-containing protein 1 (GLT1D1) (Pongo abelii (Sumatran orangutan)).